The following is a 619-amino-acid chain: Sodium-dependent dopamine transporter (619 aa).

Over M1 to E56 the chain is Cytoplasmic. The chain crosses the membrane as a discontinuously helical span at residues A57 to G95. Residues G75, A77, V78, D79, and N82 each contribute to the Na(+) site. D79 provides a ligand contact to dopamine. Helical transmembrane passes span G96–G127 and A128–F171. Dopamine-binding residues include S149 and G153. Over T172 to P235 the chain is Extracellular. A disulfide bond links C180 and C189. Residues N181, N188, N196, and N204 are each glycosylated (N-linked (GlcNAc...) asparagine). 2 consecutive transmembrane segments (helical) span residues R236 to W255 and K256 to L286. Residues P287–C305 are Extracellular-facing. Residues E306–Y334 traverse the membrane as a discontinuously helical segment. A chloride-binding site is contributed by Q316. F319 is a dopamine binding site. Na(+) contacts are provided by S320 and N352. S320 contacts chloride. Residues N335 to N375 traverse the membrane as a helical segment. S356 contributes to the chloride binding site. The Extracellular segment spans residues V376–T399. 3 helical membrane-spanning segments follow: residues L400–H441, R442–N465, and G466–Y498. Na(+) is bound by residues L417, D420, and S421. Residues S421 and A422 each coordinate dopamine. Residues G499 to P515 lie on the Cytoplasmic side of the membrane. Residues N516–T541 traverse the membrane as a helical segment. The Extracellular portion of the chain corresponds to F542–F552. A helical membrane pass occupies residues P553 to L582. An interaction with TGFB1I1 region spans residues G560–K589. The Cytoplasmic segment spans residues P583–L619.

The protein belongs to the sodium:neurotransmitter symporter (SNF) (TC 2.A.22) family. SLC6A3 subfamily. Monomer. Homooligomer; disulfide-linked. Interacts with PRKCABP and TGFB1I1. Interacts (via N-terminus) with SYNGR3 (via N-terminus). Interacts with SLC18A2. Interacts with TOR1A (ATP-bound); TOR1A regulates SLC6A3 subcellular location. Interacts with alpha-synuclein/SNCA. Interacts with SEPTIN4. Brain. Expressed in the substantia nigra and ventral tegmental area, regions that contain dopaminergic cell bodies.

It localises to the cell membrane. The protein resides in the cell projection. The protein localises to the neuron projection. Its subcellular location is the axon. It catalyses the reaction dopamine(out) + chloride(out) + Na(+)(out) = dopamine(in) + chloride(in) + Na(+)(in). The catalysed reaction is (R)-noradrenaline(out) + chloride(out) + Na(+)(out) = (R)-noradrenaline(in) + chloride(in) + Na(+)(in). It carries out the reaction dopamine(out) + chloride(out) + 2 Na(+)(out) = dopamine(in) + chloride(in) + 2 Na(+)(in). With respect to regulation, inhibited by mazindol, cocaine, desipramine, GBR 12783 dihydrochloride, GBR 12909 dihydrochloride and nomifensine. Inhibited by zinc ions. In terms of biological role, mediates sodium- and chloride-dependent transport of dopamine. Also mediates sodium- and chloride-dependent transport of norepinephrine (also known as noradrenaline). Regulator of light-dependent retinal hyaloid vessel regression, downstream of OPN5 signaling. This is Sodium-dependent dopamine transporter (Slc6a3) from Rattus norvegicus (Rat).